We begin with the raw amino-acid sequence, 206 residues long: NADH-quinone oxidoreductase subunit C (206 aa).

The protein belongs to the complex I 30 kDa subunit family. NDH-1 is composed of 14 different subunits. Subunits NuoB, C, D, E, F, and G constitute the peripheral sector of the complex.

It is found in the cell inner membrane. The catalysed reaction is a quinone + NADH + 5 H(+)(in) = a quinol + NAD(+) + 4 H(+)(out). In terms of biological role, NDH-1 shuttles electrons from NADH, via FMN and iron-sulfur (Fe-S) centers, to quinones in the respiratory chain. The immediate electron acceptor for the enzyme in this species is believed to be ubiquinone. Couples the redox reaction to proton translocation (for every two electrons transferred, four hydrogen ions are translocated across the cytoplasmic membrane), and thus conserves the redox energy in a proton gradient. The protein is NADH-quinone oxidoreductase subunit C of Bordetella avium (strain 197N).